A 197-amino-acid chain; its full sequence is Rac-like GTP-binding protein RHO1 (197 aa).

13 to 20 (GDGAVGKT) serves as a coordination point for GTP. The Effector region motif lies at 35–43 (YVPTVFDNF). GTP-binding positions include 60–64 (DTAGQ) and 118–121 (TKLD). Residue Cys-194 is modified to Cysteine methyl ester. Cys-194 is lipidated: S-geranylgeranyl cysteine. A propeptide spans 195 to 197 (SIL) (removed in mature form).

Belongs to the small GTPase superfamily. Rho family. Expressed at the tip of pollen tubes.

Its subcellular location is the cytoplasm. The protein resides in the membrane. Functionally, inactive GDP-bound Rho GTPases reside in the cytosol, are found in a complex with Rho GDP-dissociation inhibitors (Rho GDIs), and are released from the GDI protein in order to translocate to membranes upon activation. May be involved in cell polarity control during the actin-dependent tip growth of pollen tubes. The protein is Rac-like GTP-binding protein RHO1 (RHO1) of Pisum sativum (Garden pea).